The primary structure comprises 64 residues: Large ribosomal subunit protein bL33 (64 aa).

Residues Glu-16–Arg-25 are compositionally biased toward basic and acidic residues. A disordered region spans residues Glu-16–Arg-39.

Belongs to the bacterial ribosomal protein bL33 family.

The sequence is that of Large ribosomal subunit protein bL33 from Prochlorococcus marinus (strain MIT 9515).